Consider the following 61-residue polypeptide: Small ribosomal subunit protein uS14 (61 aa).

4 residues coordinate Zn(2+): C24, C27, C40, and C43.

The protein belongs to the universal ribosomal protein uS14 family. Zinc-binding uS14 subfamily. In terms of assembly, part of the 30S ribosomal subunit. Contacts proteins S3 and S10. It depends on Zn(2+) as a cofactor.

Binds 16S rRNA, required for the assembly of 30S particles and may also be responsible for determining the conformation of the 16S rRNA at the A site. The sequence is that of Small ribosomal subunit protein uS14 from Helicobacter pylori (strain G27).